The following is a 118-amino-acid chain: Small ribosomal subunit protein uS13 (118 aa).

Residues 91 to 118 (HRRGLPVRGQRTKTNARTRKGPRKPIKK) form a disordered region.

It belongs to the universal ribosomal protein uS13 family. In terms of assembly, part of the 30S ribosomal subunit. Forms a loose heterodimer with protein S19. Forms two bridges to the 50S subunit in the 70S ribosome.

In terms of biological role, located at the top of the head of the 30S subunit, it contacts several helices of the 16S rRNA. In the 70S ribosome it contacts the 23S rRNA (bridge B1a) and protein L5 of the 50S subunit (bridge B1b), connecting the 2 subunits; these bridges are implicated in subunit movement. Contacts the tRNAs in the A and P-sites. The chain is Small ribosomal subunit protein uS13 from Pectobacterium atrosepticum (strain SCRI 1043 / ATCC BAA-672) (Erwinia carotovora subsp. atroseptica).